The sequence spans 213 residues: Holliday junction resolvase RecU (213 aa).

Mg(2+) is bound by residues T99, D101, E114, and Q133.

The protein belongs to the RecU family. It depends on Mg(2+) as a cofactor.

The protein localises to the cytoplasm. The enzyme catalyses Endonucleolytic cleavage at a junction such as a reciprocal single-stranded crossover between two homologous DNA duplexes (Holliday junction).. In terms of biological role, endonuclease that resolves Holliday junction intermediates in genetic recombination. Cleaves mobile four-strand junctions by introducing symmetrical nicks in paired strands. Promotes annealing of linear ssDNA with homologous dsDNA. Required for DNA repair, homologous recombination and chromosome segregation. The polypeptide is Holliday junction resolvase RecU (Lactococcus lactis subsp. cremoris (strain MG1363)).